Reading from the N-terminus, the 387-residue chain is MYVVNPEEKVIEIMKQTGIDLAATLPCDRIKNLLPLVSENFPEIKLTREENGVGICAGIYLAGGKPMMLIQSTGLGNMINALESLNVTCKIPLPILASWRGVYKEGIEAQVPLGAHLPSILEGAGLTYTIIGETEKLPLLENVILDAFENSRPHIALVSPKVWEASECCAWQAAGMPIKPEIMERTCRFSLTSGTLKPFMLRNDAICTLASELDDEITVTNLGVPCKELYACRDRELNFYMFGSMGLVSSIGLGLALRSEKTVITFDGDGSLLMNPNALLEIAKEAPKNLIIIALDNGAYGSTGSQETCALRYIDLEIFANACGIQNTAKVNSKEGVIEAFRKFKAMRELSFIHVILKPGNTNAPNIPMSPEEATKRFKETLDVKKF.

It belongs to the TPP enzyme family. The cofactor is thiamine diphosphate.

It carries out the reaction 3-sulfopyruvate + H(+) = sulfoacetaldehyde + CO2. Its pathway is cofactor biosynthesis; coenzyme M biosynthesis. Its function is as follows. Involved in the biosynthesis of the coenzyme M (2-mercaptoethanesulfonic acid). Catalyzes the decarboxylation of sulfopyruvate to sulfoacetaldehyde. Is not able to decarboxylate the analogous compounds 2-oxoglutarate or 2-oxosuberate. This Methanosarcina acetivorans (strain ATCC 35395 / DSM 2834 / JCM 12185 / C2A) protein is Sulfopyruvate decarboxylase.